Consider the following 198-residue polypeptide: Dynein light chain Tctex-type protein 2 (198 aa).

The disordered stretch occupies residues 1-34 (MEKRGRGVKSSPIQTPNQTPQQAPVTPRKERRPS). Over residues 11 to 24 (SPIQTPNQTPQQAP) the composition is skewed to polar residues.

This sequence belongs to the dynein light chain Tctex-type family. In terms of assembly, interacts with CCDC159. Interacts with CSNK2B. Expressed predominantly in testis. Also expressed in brain, lung and trachea.

It localises to the cytoplasm. It is found in the cytoskeleton. Its subcellular location is the cytoplasmic granule. The protein localises to the membrane. Functionally, may be an accessory component of axonemal dynein and cytoplasmic dynein 1. Candidate for involvement in male sterility. In Homo sapiens (Human), this protein is Dynein light chain Tctex-type protein 2.